Reading from the N-terminus, the 71-residue chain is Protein KleB (71 aa).

A DNA-binding region (H-T-H motif) is located at residues 9-28 (IETCCRRCGKSIRTLSHTII).

The sequence is that of Protein KleB (kleB) from Escherichia coli.